We begin with the raw amino-acid sequence, 327 residues long: Zinc transport protein ZntB (327 aa).

Residues methionine 1–methionine 273 lie on the Cytoplasmic side of the membrane. Residues alanine 274–isoleucine 294 form a helical membrane-spanning segment. At proline 295–glutamine 300 the chain is on the periplasmic side. The chain crosses the membrane as a helical span at residues phenylalanine 301–leucine 321. Topologically, residues histidine 322–leucine 327 are cytoplasmic.

This sequence belongs to the CorA metal ion transporter (MIT) (TC 1.A.35) family.

Its subcellular location is the cell inner membrane. It carries out the reaction Zn(2+)(out) + H(+)(out) = Zn(2+)(in) + H(+)(in). Functionally, zinc transporter. Acts as a Zn(2+):proton symporter, which likely mediates zinc ion uptake. This is Zinc transport protein ZntB from Escherichia coli O6:K15:H31 (strain 536 / UPEC).